The chain runs to 140 residues: Nucleoside diphosphate kinase (140 aa).

ATP-binding residues include lysine 11, phenylalanine 59, arginine 87, threonine 93, arginine 104, and asparagine 114. The active-site Pros-phosphohistidine intermediate is the histidine 117.

It belongs to the NDK family. As to quaternary structure, homotetramer. It depends on Mg(2+) as a cofactor.

It is found in the cytoplasm. It catalyses the reaction a 2'-deoxyribonucleoside 5'-diphosphate + ATP = a 2'-deoxyribonucleoside 5'-triphosphate + ADP. It carries out the reaction a ribonucleoside 5'-diphosphate + ATP = a ribonucleoside 5'-triphosphate + ADP. Functionally, major role in the synthesis of nucleoside triphosphates other than ATP. The ATP gamma phosphate is transferred to the NDP beta phosphate via a ping-pong mechanism, using a phosphorylated active-site intermediate. This chain is Nucleoside diphosphate kinase, found in Sphingopyxis alaskensis (strain DSM 13593 / LMG 18877 / RB2256) (Sphingomonas alaskensis).